The chain runs to 257 residues: Sulfur carrier protein FdhD (257 aa).

Cys105 acts as the Cysteine persulfide intermediate in catalysis.

This sequence belongs to the FdhD family.

It is found in the cytoplasm. Functionally, required for formate dehydrogenase (FDH) activity. Acts as a sulfur carrier protein that transfers sulfur from IscS to the molybdenum cofactor prior to its insertion into FDH. The sequence is that of Sulfur carrier protein FdhD from Saccharolobus solfataricus (strain ATCC 35092 / DSM 1617 / JCM 11322 / P2) (Sulfolobus solfataricus).